Reading from the N-terminus, the 880-residue chain is DNA-directed RNA polymerase subunit Rpo1N (880 aa).

Zn(2+) contacts are provided by cysteine 58, cysteine 61, cysteine 68, and histidine 71. Residues lysine 88 and 92–95 (EFLK) each bind dsDNA. The Zn(2+) site is built by cysteine 98 and cysteine 101. Lysine 138 contacts dsDNA. 2 residues coordinate Zn(2+): cysteine 146 and cysteine 149. DsDNA contacts are provided by residues lysine 303, 305 to 310 (KEGRFR), arginine 323, and glutamine 422. Aspartate 456, aspartate 458, and aspartate 460 together coordinate Mg(2+). Positions 573, 575, 580, and 582 each coordinate Zn(2+). DsDNA is bound by residues 812–822 (RTSQSGYMQRR) and glutamine 815.

It belongs to the RNA polymerase beta' chain family. In terms of assembly, part of the 13-subunit RNA polymerase complex. Rpo1N and Rpo5 form a cleft which docks Rpo13. Interacts with Rpo8 on the periphery of the clamp head. The cofactor is Mg(2+). Zn(2+) serves as cofactor.

It localises to the cytoplasm. It catalyses the reaction RNA(n) + a ribonucleoside 5'-triphosphate = RNA(n+1) + diphosphate. Functionally, DNA-dependent RNA polymerase (RNAP) catalyzes the transcription of DNA into RNA using the four ribonucleoside triphosphates as substrates. Forms the clamp head domain. The polypeptide is DNA-directed RNA polymerase subunit Rpo1N (Saccharolobus shibatae (strain ATCC 51178 / DSM 5389 / JCM 8931 / NBRC 15437 / B12) (Sulfolobus shibatae)).